A 284-amino-acid chain; its full sequence is MKRGCAIAVMICGLITSVSAASAADLIVQEPVFEPLPQPALAGWYLRGDIGYNFKSKTGGKWDFWNQFEEPYRGVDDTFNYDDFSLKGGASYGVGVGYRFNDMLRTDLTLDYFRASINGRTNCPSYVKSSHGLNPVEDNCHYEDNSKASVWTAMANAYVDLPRVGPLTPYLGAGIGAAYVKYDTWKTSEICPTCTLQSDKDGFDSWRFAMALMAGVSYDLTDQLKLDLGYRYLRVNGGNAYGYDEQDRQVINQYGQGAGADGPQAKDNGFNIHTVRAGLRYEFR.

Residues 1 to 23 (MKRGCAIAVMICGLITSVSAASA) form the signal peptide.

Belongs to the surface antigen msp4 family.

This is an uncharacterized protein from Brucella melitensis biotype 1 (strain ATCC 23456 / CCUG 17765 / NCTC 10094 / 16M).